Here is a 99-residue protein sequence, read N- to C-terminus: Small ribosomal subunit protein bS6c (99 aa).

It belongs to the bacterial ribosomal protein bS6 family.

The protein localises to the plastid. It localises to the chloroplast. In terms of biological role, binds together with bS18 to 16S ribosomal RNA. In Cyanidioschyzon merolae (strain NIES-3377 / 10D) (Unicellular red alga), this protein is Small ribosomal subunit protein bS6c.